The following is a 539-amino-acid chain: uncharacterized protein (539 aa).

ABC transporter domains follow at residues 9–276 and 288–536; these read LEVK…EFKK and IKLE…QEMF. ATP is bound by residues 41–48 and 325–332; these read GKSGAGKS and GTSGAGKT.

The protein belongs to the ABC transporter superfamily.

This is an uncharacterized protein from Methanocaldococcus jannaschii (strain ATCC 43067 / DSM 2661 / JAL-1 / JCM 10045 / NBRC 100440) (Methanococcus jannaschii).